A 201-amino-acid chain; its full sequence is Iron-sulfur flavoprotein AF_1896 (201 aa).

Residues Cys-46, Cys-49, Cys-52, and Cys-57 each coordinate [4Fe-4S] cluster.

The protein belongs to the SsuE family. Isf subfamily. Homodimer. FMN serves as cofactor. It depends on [4Fe-4S] cluster as a cofactor.

Functionally, redox-active protein probably involved in electron transport. The protein is Iron-sulfur flavoprotein AF_1896 of Archaeoglobus fulgidus (strain ATCC 49558 / DSM 4304 / JCM 9628 / NBRC 100126 / VC-16).